The chain runs to 259 residues: UPF0246 protein PA14_18590 (259 aa).

The protein belongs to the UPF0246 family.

The polypeptide is UPF0246 protein PA14_18590 (Pseudomonas aeruginosa (strain UCBPP-PA14)).